Consider the following 311-residue polypeptide: Mediator of RNA polymerase II transcription subunit 27-B (311 aa).

This sequence belongs to the Mediator complex subunit 27 family. As to quaternary structure, component of the Mediator complex.

The protein localises to the nucleus. Component of the Mediator complex, a coactivator involved in the regulated transcription of nearly all RNA polymerase II-dependent genes. Mediator functions as a bridge to convey information from gene-specific regulatory proteins to the basal RNA polymerase II transcription machinery. Mediator is recruited to promoters by direct interactions with regulatory proteins and serves as a scaffold for the assembly of a functional preinitiation complex with RNA polymerase II and the general transcription factors. The chain is Mediator of RNA polymerase II transcription subunit 27-B (med27-b) from Xenopus laevis (African clawed frog).